The primary structure comprises 506 residues: Anaerobic nitric oxide reductase transcription regulator NorR (506 aa).

Asp57 carries the post-translational modification 4-aspartylphosphate. The region spanning 187 to 416 is the Sigma-54 factor interaction domain; the sequence is MIGLSPAMTQ…LEHAIHRAVV (230 aa). ATP is bound by residues 215-222 and 278-287; these read GETGTGKE and ADNGTLFLDE. Positions 481–500 form a DNA-binding region, H-T-H motif; it reads WAASARALETDVANLHRLAK.

The protein operates within nitrogen metabolism; nitric oxide reduction. Its function is as follows. Required for the expression of anaerobic nitric oxide (NO) reductase, acts as a transcriptional activator for at least the norVW operon. Activation also requires sigma-54. The chain is Anaerobic nitric oxide reductase transcription regulator NorR from Salmonella dublin (strain CT_02021853).